A 562-amino-acid polypeptide reads, in one-letter code: uncharacterized protein (562 aa).

Helical transmembrane passes span 4–26 (VRWI…GTML), 33–55 (GFAI…LGTF), 59–78 (ALLR…YKSG), 90–112 (LAQV…AFAF), and 159–181 (IAAG…VPFA). RCK C-terminal domains are found at residues 207–287 (PKTE…IIGT) and 295–375 (LKAI…QVGQ). The next 6 helical transmembrane spans lie at 385–402 (IAFL…GLVS), 406–428 (GGIA…CGWL), 449–471 (LGLG…VAIQ), 476–498 (LLVG…FAYH), 505–524 (VITC…VTGA), and 539–561 (VPYA…CTFV).

It belongs to the AAE transporter (TC 2.A.81) family.

The protein resides in the cell membrane. This is an uncharacterized protein from Bradyrhizobium diazoefficiens (strain JCM 10833 / BCRC 13528 / IAM 13628 / NBRC 14792 / USDA 110).